The chain runs to 171 residues: ATP synthase subunit b (171 aa).

The chain crosses the membrane as a helical span at residues 19-39 (VGVGLILFIAIVIWAKAPAMI).

It belongs to the ATPase B chain family. F-type ATPases have 2 components, F(1) - the catalytic core - and F(0) - the membrane proton channel. F(1) has five subunits: alpha(3), beta(3), gamma(1), delta(1), epsilon(1). F(0) has three main subunits: a(1), b(2) and c(10-14). The alpha and beta chains form an alternating ring which encloses part of the gamma chain. F(1) is attached to F(0) by a central stalk formed by the gamma and epsilon chains, while a peripheral stalk is formed by the delta and b chains.

Its subcellular location is the cell inner membrane. Its function is as follows. F(1)F(0) ATP synthase produces ATP from ADP in the presence of a proton or sodium gradient. F-type ATPases consist of two structural domains, F(1) containing the extramembraneous catalytic core and F(0) containing the membrane proton channel, linked together by a central stalk and a peripheral stalk. During catalysis, ATP synthesis in the catalytic domain of F(1) is coupled via a rotary mechanism of the central stalk subunits to proton translocation. In terms of biological role, component of the F(0) channel, it forms part of the peripheral stalk, linking F(1) to F(0). This chain is ATP synthase subunit b, found in Caulobacter sp. (strain K31).